We begin with the raw amino-acid sequence, 341 residues long: 4-hydroxy-2-oxovalerate aldolase (341 aa).

Residues Val-9–Met-259 form the Pyruvate carboxyltransferase domain. Residue Arg-17 to Asp-18 coordinates substrate. Asp-18 is a binding site for Mn(2+). His-21 functions as the Proton acceptor in the catalytic mechanism. Positions 171 and 198 each coordinate substrate. The Mn(2+) site is built by His-198 and His-200. Tyr-289 contributes to the substrate binding site.

It belongs to the 4-hydroxy-2-oxovalerate aldolase family.

It carries out the reaction (S)-4-hydroxy-2-oxopentanoate = acetaldehyde + pyruvate. This is 4-hydroxy-2-oxovalerate aldolase from Bacillus thuringiensis (strain Al Hakam).